The following is a 157-amino-acid chain: Transcriptional repressor NrdR (157 aa).

Residues 3 to 34 (CPFCGHAESQVKDSRPSEDGAAIRRRRMCPEC) fold into a zinc finger. Residues 49–139 (LIIVKRSGRR…VYRDFKETSD (91 aa)) enclose the ATP-cone domain.

The protein belongs to the NrdR family. Requires Zn(2+) as cofactor.

In terms of biological role, negatively regulates transcription of bacterial ribonucleotide reductase nrd genes and operons by binding to NrdR-boxes. In Caulobacter vibrioides (strain ATCC 19089 / CIP 103742 / CB 15) (Caulobacter crescentus), this protein is Transcriptional repressor NrdR.